The chain runs to 533 residues: Fimbrial subunit type 1 (533 aa).

The N-terminal stretch at 1–30 (MHSLNTRRGLGLAAAMTLAAGALVAPTGAA) is a signal peptide. The LPXTG sorting signal signature appears at 496-500 (LPLTG). A Pentaglycyl murein peptidoglycan amidated threonine modification is found at T499. Residues 500 to 533 (GANGVIFLTIAGALLVAGGAVVAYANKRRHVAKH) constitute a propeptide, removed by sortase.

The protein localises to the secreted. The protein resides in the cell wall. It localises to the fimbrium. Functionally, major fimbrial subunit of A.viscosus. This chain is Fimbrial subunit type 1, found in Actinomyces viscosus.